The sequence spans 225 residues: Superantigen-like protein 11 (225 aa).

The N-terminal stretch at 1–30 is a signal peptide; sequence MKLKNIAKASLALGILTTGMITTTAQPVKA. Residues 94 to 196 form a sialyl Lewis X-binding region; it reads VDIFVVRENS…RITMKDGGFY (103 aa).

This sequence belongs to the staphylococcal/streptococcal toxin family. As to quaternary structure, homodimer (via its C-terminal domain). Interacts with host FCAR and SELPLG (via sialyl Lewis X).

The protein localises to the secreted. Its function is as follows. Secreted protein that plays a role in the inhibition of host immune system. Targets myeloid cells such as monocytes or granulocytes through binding with sialyllactosamine-containing glycoproteins. Prevents initial rolling of neutrophils toward the site of infection by interacting with host SELPLG. Disrupts neutrophil motility by induction of cell adhesion via interacting with glycans but independently of SELPLG. The protein is Superantigen-like protein 11 of Staphylococcus aureus (strain Newman).